The following is a 193-amino-acid chain: MNYLAHLHLASLAESSLLGNLLADFVRGNPAGEYNPAVVAGIMMHRRVDVLTDNLPQVRACRAYFSEEHRRVAPITLDVVWDHFLARHWQQLEPSLSLPGFTQQAQSQILPHLPLTPPRFQNLNGYIWPERWLERYAELPFIGNVLAGMASRRPRLAALAGSFADVERNYHQLETQFWQFYPQMMQQAKDKQL.

Belongs to the AcpH family.

The catalysed reaction is holo-[ACP] + H2O = apo-[ACP] + (R)-4'-phosphopantetheine + H(+). Functionally, converts holo-ACP to apo-ACP by hydrolytic cleavage of the phosphopantetheine prosthetic group from ACP. This Serratia proteamaculans (strain 568) protein is Acyl carrier protein phosphodiesterase.